A 192-amino-acid polypeptide reads, in one-letter code: Flavin prenyltransferase UbiX (192 aa).

Residues 10-12 (GAS), serine 36, 92-95 (SVAT), and arginine 127 contribute to the FMN site. The dimethylallyl phosphate site is built by tyrosine 157 and lysine 173.

Belongs to the UbiX/PAD1 family.

The catalysed reaction is dimethylallyl phosphate + FMNH2 = prenylated FMNH2 + phosphate. Flavin prenyltransferase that catalyzes the synthesis of the prenylated FMN cofactor (prenyl-FMN) for 4-hydroxy-3-polyprenylbenzoic acid decarboxylase UbiD. The prenyltransferase is metal-independent and links a dimethylallyl moiety from dimethylallyl monophosphate (DMAP) to the flavin N5 and C6 atoms of FMN. This is Flavin prenyltransferase UbiX from Chlamydia muridarum (strain MoPn / Nigg).